We begin with the raw amino-acid sequence, 183 residues long: ATP synthase subunit b, chloroplastic (183 aa).

A helical membrane pass occupies residues 25-45 (DILATNLINLTVVVGVLIFFG).

Belongs to the ATPase B chain family. As to quaternary structure, F-type ATPases have 2 components, F(1) - the catalytic core - and F(0) - the membrane proton channel. F(1) has five subunits: alpha(3), beta(3), gamma(1), delta(1), epsilon(1). F(0) has four main subunits: a(1), b(1), b'(1) and c(10-14). The alpha and beta chains form an alternating ring which encloses part of the gamma chain. F(1) is attached to F(0) by a central stalk formed by the gamma and epsilon chains, while a peripheral stalk is formed by the delta, b and b' chains.

It is found in the plastid. It localises to the chloroplast thylakoid membrane. Its function is as follows. F(1)F(0) ATP synthase produces ATP from ADP in the presence of a proton or sodium gradient. F-type ATPases consist of two structural domains, F(1) containing the extramembraneous catalytic core and F(0) containing the membrane proton channel, linked together by a central stalk and a peripheral stalk. During catalysis, ATP synthesis in the catalytic domain of F(1) is coupled via a rotary mechanism of the central stalk subunits to proton translocation. In terms of biological role, component of the F(0) channel, it forms part of the peripheral stalk, linking F(1) to F(0). The chain is ATP synthase subunit b, chloroplastic from Sorghum bicolor (Sorghum).